The sequence spans 1939 residues: Myosin heavy chain, skeletal muscle, adult (1939 aa).

Position 2 is an N-acetylalanine (alanine 2). A Myosin N-terminal SH3-like domain is found at 34–83 (DAKSSVFVVHPKESFVKGTIQSKEGGKVTVKTEGGETLTVKEDQVFSMNP). Lysine 36 is modified (N6-methyllysine). The region spanning 87–781 (DKIEDMAMMT…LLGLLEEMRD (695 aa)) is the Myosin motor domain. Lysine 131 carries the post-translational modification N6,N6,N6-trimethyllysine. 180–187 (GESGAGKT) lines the ATP pocket. N6,N6,N6-trimethyllysine is present on lysine 552. Residues 658–680 (LNKLMANLRSTHPHFVRCIIPNE) form an actin-binding region. Histidine 756 carries the pros-methylhistidine modification. An actin-binding region spans residues 760-774 (RFGHTKVFFKAGLLG). The 30-residue stretch at 784–813 (LAEIITRTQARCRGFLMRVEYRRMVERRES) folds into the IQ domain. A hinge region spans residues 839–841 (IKP). Positions 842 to 1939 (LLKSAESEKE…IHGKKIEEEE (1098 aa)) form a coiled coil.

Belongs to the TRAFAC class myosin-kinesin ATPase superfamily. Myosin family. Muscle myosin is a hexameric protein that consists of 2 heavy chain subunits (MHC), 2 alkali light chain subunits (MLC) and 2 regulatory light chain subunits (MLC-2).

It is found in the cytoplasm. Its subcellular location is the myofibril. Its function is as follows. Muscle contraction. Myosin is a protein that binds to F-actin and has ATPase activity that is activated by F-actin. This Gallus gallus (Chicken) protein is Myosin heavy chain, skeletal muscle, adult.